A 238-amino-acid polypeptide reads, in one-letter code: Urease subunit alpha (238 aa).

The tract at residues 1-102 (MKLTPKELDK…LVTVHTPIEA (102 aa)) is urease gamma. The segment at 103–238 (NGKLVPGELF…DDNYVKTIKE (136 aa)) is urease beta.

It in the N-terminal section; belongs to the urease gamma subunit family. The protein in the C-terminal section; belongs to the urease beta subunit family. In terms of assembly, heterohexamer of 3 UreA (alpha) and 3 UreB (beta) subunits.

Its subcellular location is the cytoplasm. The catalysed reaction is urea + 2 H2O + H(+) = hydrogencarbonate + 2 NH4(+). Its pathway is nitrogen metabolism; urea degradation; CO(2) and NH(3) from urea (urease route): step 1/1. In Helicobacter pylori (strain P12), this protein is Urease subunit alpha.